The following is a 404-amino-acid chain: Glucose-1-phosphate adenylyltransferase (404 aa).

Alpha-D-glucose 1-phosphate is bound by residues Y99, G164, 179–180 (EK), and S197.

It belongs to the bacterial/plant glucose-1-phosphate adenylyltransferase family.

The enzyme catalyses alpha-D-glucose 1-phosphate + ATP + H(+) = ADP-alpha-D-glucose + diphosphate. It participates in glycan biosynthesis; glycogen biosynthesis. Involved in the biosynthesis of ADP-glucose building block, required in the biosynthesis of maltose-1-phosphate (M1P) and in the elongation reactions to produce linear alpha-1,4-glucans. Catalyzes the reaction between ATP and alpha-D-glucose 1-phosphate (G1P) to produce pyrophosphate and ADP-Glc. The protein is Glucose-1-phosphate adenylyltransferase of Mycolicibacterium smegmatis (strain ATCC 700084 / mc(2)155) (Mycobacterium smegmatis).